Here is a 589-residue protein sequence, read N- to C-terminus: Phenylalanine--tRNA ligase beta subunit (589 aa).

Residues L302–M379 enclose the B5 domain. Residues D357, D363, E366, and D367 each contribute to the Mg(2+) site.

This sequence belongs to the phenylalanyl-tRNA synthetase beta subunit family. Type 2 subfamily. As to quaternary structure, heterotetramer; dimer of two heterodimers formed by FARSA and FARSB. The cofactor is Mg(2+).

It is found in the cytoplasm. It catalyses the reaction tRNA(Phe) + L-phenylalanine + ATP = L-phenylalanyl-tRNA(Phe) + AMP + diphosphate + H(+). The sequence is that of Phenylalanine--tRNA ligase beta subunit (FARSB) from Homo sapiens (Human).